The chain runs to 179 residues: ATP synthase subunit delta (179 aa).

The protein belongs to the ATPase delta chain family. In terms of assembly, F-type ATPases have 2 components, F(1) - the catalytic core - and F(0) - the membrane proton channel. F(1) has five subunits: alpha(3), beta(3), gamma(1), delta(1), epsilon(1). F(0) has three main subunits: a(1), b(2) and c(10-14). The alpha and beta chains form an alternating ring which encloses part of the gamma chain. F(1) is attached to F(0) by a central stalk formed by the gamma and epsilon chains, while a peripheral stalk is formed by the delta and b chains.

The protein localises to the cell membrane. In terms of biological role, f(1)F(0) ATP synthase produces ATP from ADP in the presence of a proton or sodium gradient. F-type ATPases consist of two structural domains, F(1) containing the extramembraneous catalytic core and F(0) containing the membrane proton channel, linked together by a central stalk and a peripheral stalk. During catalysis, ATP synthesis in the catalytic domain of F(1) is coupled via a rotary mechanism of the central stalk subunits to proton translocation. Its function is as follows. This protein is part of the stalk that links CF(0) to CF(1). It either transmits conformational changes from CF(0) to CF(1) or is implicated in proton conduction. The sequence is that of ATP synthase subunit delta from Listeria monocytogenes serovar 1/2a (strain ATCC BAA-679 / EGD-e).